The following is a 120-amino-acid chain: NAD(P)H-quinone oxidoreductase subunit 3, chloroplastic (120 aa).

3 consecutive transmembrane segments (helical) span residues 9–29, 64–84, and 88–108; these read IFWA…FISG, MFAL…PWAM, and VLGV…IVGS.

It belongs to the complex I subunit 3 family. NDH is composed of at least 16 different subunits, 5 of which are encoded in the nucleus.

The protein localises to the plastid. Its subcellular location is the chloroplast thylakoid membrane. The enzyme catalyses a plastoquinone + NADH + (n+1) H(+)(in) = a plastoquinol + NAD(+) + n H(+)(out). The catalysed reaction is a plastoquinone + NADPH + (n+1) H(+)(in) = a plastoquinol + NADP(+) + n H(+)(out). NDH shuttles electrons from NAD(P)H:plastoquinone, via FMN and iron-sulfur (Fe-S) centers, to quinones in the photosynthetic chain and possibly in a chloroplast respiratory chain. The immediate electron acceptor for the enzyme in this species is believed to be plastoquinone. Couples the redox reaction to proton translocation, and thus conserves the redox energy in a proton gradient. This chain is NAD(P)H-quinone oxidoreductase subunit 3, chloroplastic, found in Vitis vinifera (Grape).